A 225-amino-acid chain; its full sequence is Thymidine kinase (225 aa).

Residue 15–22 participates in ATP binding; it reads GSMFSGKT. The interval 85–110 is disordered; it reads KKQNHRTTTQCRSGDGTNNPGGVIPS. Positions 90 to 104 are enriched in polar residues; it reads RTTTQCRSGDGTNNP. 121–124 is an ATP binding site; it reads DEAN. E122 acts as the Proton acceptor in catalysis. Zn(2+)-binding residues include C178, C181, C216, and C219.

Belongs to the thymidine kinase family. As to quaternary structure, homotetramer.

It is found in the cytoplasm. It catalyses the reaction thymidine + ATP = dTMP + ADP + H(+). This chain is Thymidine kinase, found in Haloquadratum walsbyi (strain DSM 16790 / HBSQ001).